Here is a 986-residue protein sequence, read N- to C-terminus: DNA polymerase I (986 aa).

The region spanning 1–303 (MFMSAKSPLL…RTFIDKIQAF (303 aa)) is the 5'-3' exonuclease domain. The 3'-5' exonuclease domain maps to 304–592 (HRNFSDNQSP…MEDRGIRIDC (289 aa)). Residues 308–327 (SDNQSPVPMGNEADNGEPKK) are disordered. The tract at residues 593–986 (DYLQTLSQQL…HRGSNWMEAK (394 aa)) is polymerase.

It belongs to the DNA polymerase type-A family. Single-chain monomer with multiple functions.

The catalysed reaction is DNA(n) + a 2'-deoxyribonucleoside 5'-triphosphate = DNA(n+1) + diphosphate. In terms of biological role, in addition to polymerase activity, this DNA polymerase exhibits 3'-5' and 5'-3' exonuclease activity. In Synechocystis sp. (strain ATCC 27184 / PCC 6803 / Kazusa), this protein is DNA polymerase I (polA).